The chain runs to 500 residues: Oogenesin-3 (500 aa).

The LRR 1; degenerate repeat unit spans residues 116-143 (RCKLRVLKWRDEQHDFCGIWPGSHEAED). The LRR 2; degenerate repeat unit spans residues 198–222 (HLLCRKLVIETLTKDTVIEIFKIVN). Residues 223-248 (ADCIQELELYSLCLEDLAFLNPYLRQ) form an LRR 3; degenerate repeat. Residues 249 to 285 (MDNLLELTLDHVTDSLSMGDSEMCEEEMITLVSQLPT) form an LRR 4; degenerate repeat. LRR repeat units follow at residues 286 to 311 (FPCLQKLCVNDVYFIYGNLNEILRCL), 312 to 343 (KKPLVSFCISNCELSQSDLDCLPYCLNIFELK), 344 to 367 (CLYLIDIPLNHLCLDPLGFLLESV), 368 to 395 (RHTLECLELKSCDMGEPQFNALLPALSQ), and 396 to 420 (CSHLTDVSFWENELSLLFLKQLLQH).

Belongs to the PRAME family. In terms of tissue distribution, expressed in ovary, specifically in oocytes. Detected in follicles with two layers of granulosa cells, and are present in early as well as large antral follicles.

This Mus musculus (Mouse) protein is Oogenesin-3.